Consider the following 67-residue polypeptide: DNA-directed RNA polymerase subunit omega (67 aa).

This sequence belongs to the RNA polymerase subunit omega family. As to quaternary structure, the RNAP catalytic core consists of 2 alpha, 1 beta, 1 beta' and 1 omega subunit. When a sigma factor is associated with the core the holoenzyme is formed, which can initiate transcription.

The enzyme catalyses RNA(n) + a ribonucleoside 5'-triphosphate = RNA(n+1) + diphosphate. Its function is as follows. Promotes RNA polymerase assembly. Latches the N- and C-terminal regions of the beta' subunit thereby facilitating its interaction with the beta and alpha subunits. In Polaromonas sp. (strain JS666 / ATCC BAA-500), this protein is DNA-directed RNA polymerase subunit omega.